Here is a 65-residue protein sequence, read N- to C-terminus: Large ribosomal subunit protein bL35 (65 aa).

Residues M1–D51 are disordered. Residues H31–L44 are compositionally biased toward basic residues.

This sequence belongs to the bacterial ribosomal protein bL35 family.

This Pediococcus pentosaceus (strain ATCC 25745 / CCUG 21536 / LMG 10740 / 183-1w) protein is Large ribosomal subunit protein bL35.